Reading from the N-terminus, the 490-residue chain is Dipeptide and tripeptide permease A (490 aa).

The Cytoplasmic portion of the chain corresponds to 1-34 (MSNANNNQPENVSLNAFKQPRAFYLIFSIELWER). A helical membrane pass occupies residues 35 to 55 (FGYYGLQGIMAVYLVKMLGMT). At 56-59 (EADS) the chain is on the periplasmic side. The chain crosses the membrane as a helical span at residues 60-80 (ITLFSSFSALVYGFVAIGGWL). Residues 81–89 (GDKVLGAKR) lie on the Cytoplasmic side of the membrane. The chain crosses the membrane as a helical span at residues 90 to 110 (VIMLGALVLAIGYAFVAYSGH). Position 111 (Asp111) is a topological domain, periplasmic. The chain crosses the membrane as a helical span at residues 112–132 (LSLVYVGMATIAVGNGLFKAN). The Cytoplasmic segment spans residues 133-153 (PSSLLSTCYEKNDPRLDGAFT). A helical transmembrane segment spans residues 154–174 (MYYMSVNIGSFFSMLATPWLA). Topologically, residues 175–176 (AR) are periplasmic. Residues 177–197 (FGWSVAFSLSVVGMLITLVNF) form a helical membrane-spanning segment. Topologically, residues 198–217 (MMCRRWVKDQGSKPDFAPLQ) are cytoplasmic. The helical transmembrane segment at 218–238 (VGKLMMTLVGVVILVAISTWL) threads the bilayer. The Periplasmic portion of the chain corresponds to 239–246 (LHNQTIAR). Residues 247-267 (WALAIISAGIILIFAKETFAL) traverse the membrane as a helical segment. The Cytoplasmic portion of the chain corresponds to 268 to 274 (QGGARRK). A helical membrane pass occupies residues 275–295 (MIVAFLLMLEAVVFFVLYSQM). Residues 296-320 (PTSLNFFAIHNVEHSIFGIAFEPEQ) lie on the Periplasmic side of the membrane. A helical membrane pass occupies residues 321-341 (YQALNPFWIMVASPILAAIYN). The Cytoplasmic portion of the chain corresponds to 342 to 352 (KMGDRLPMPHK). The chain crosses the membrane as a helical span at residues 353 to 373 (FAIGMVLCSGAFLVLPWGASF). The Periplasmic segment spans residues 374-383 (ANEAGIVSVN). The chain crosses the membrane as a helical span at residues 384–404 (WLILSYALQSIGELMISGLGL). Residues 405–414 (AMVAQLVPQR) lie on the Cytoplasmic side of the membrane. Residues 415-435 (LMGFIMGSWFLTTAAAALIAG) form a helical membrane-spanning segment. Residues 436–460 (KVAALTAVPGGEVADPHASLAIYSH) are Periplasmic-facing. The chain crosses the membrane as a helical span at residues 461 to 481 (VFMQIGLATAVIAVLMLLTAP). The Cytoplasmic segment spans residues 482–490 (KLNRMTLGD).

It belongs to the major facilitator superfamily. Proton-dependent oligopeptide transporter (POT/PTR) (TC 2.A.17) family. DtpA subfamily.

It localises to the cell inner membrane. In terms of biological role, proton-dependent permease that transports di- and tripeptides. This chain is Dipeptide and tripeptide permease A, found in Edwardsiella piscicida.